The chain runs to 183 residues: Translation initiation factor IF-3 (183 aa).

This sequence belongs to the IF-3 family. Monomer.

The protein resides in the cytoplasm. Its function is as follows. IF-3 binds to the 30S ribosomal subunit and shifts the equilibrium between 70S ribosomes and their 50S and 30S subunits in favor of the free subunits, thus enhancing the availability of 30S subunits on which protein synthesis initiation begins. The polypeptide is Translation initiation factor IF-3 (Pseudomonas syringae pv. tomato (strain ATCC BAA-871 / DC3000)).